Here is a 553-residue protein sequence, read N- to C-terminus: Dihydroxy-acid dehydratase (553 aa).

Residue Asp78 participates in Mg(2+) binding. Cys119 serves as a coordination point for [2Fe-2S] cluster. Asp120 and Lys121 together coordinate Mg(2+). N6-carboxylysine is present on Lys121. Cys191 provides a ligand contact to [2Fe-2S] cluster. Mg(2+) is bound at residue Glu442. The Proton acceptor role is filled by Ser468.

It belongs to the IlvD/Edd family. Homodimer. The cofactor is [2Fe-2S] cluster. Mg(2+) is required as a cofactor.

The catalysed reaction is (2R)-2,3-dihydroxy-3-methylbutanoate = 3-methyl-2-oxobutanoate + H2O. The enzyme catalyses (2R,3R)-2,3-dihydroxy-3-methylpentanoate = (S)-3-methyl-2-oxopentanoate + H2O. It functions in the pathway amino-acid biosynthesis; L-isoleucine biosynthesis; L-isoleucine from 2-oxobutanoate: step 3/4. It participates in amino-acid biosynthesis; L-valine biosynthesis; L-valine from pyruvate: step 3/4. Functionally, functions in the biosynthesis of branched-chain amino acids. Catalyzes the dehydration of (2R,3R)-2,3-dihydroxy-3-methylpentanoate (2,3-dihydroxy-3-methylvalerate) into 2-oxo-3-methylpentanoate (2-oxo-3-methylvalerate) and of (2R)-2,3-dihydroxy-3-methylbutanoate (2,3-dihydroxyisovalerate) into 2-oxo-3-methylbutanoate (2-oxoisovalerate), the penultimate precursor to L-isoleucine and L-valine, respectively. This chain is Dihydroxy-acid dehydratase, found in Carboxydothermus hydrogenoformans (strain ATCC BAA-161 / DSM 6008 / Z-2901).